The chain runs to 333 residues: Taste receptor type 2 member 123 (333 aa).

The Extracellular segment spans residues 1-13; that stretch reads MFSQKINYSHLFT. N7 carries N-linked (GlcNAc...) asparagine glycosylation. A helical membrane pass occupies residues 14–34; the sequence is FSITLYVEIVTGILGHGFIAL. Residues 35–60 lie on the Cytoplasmic side of the membrane; sequence VNIMDWVKRRRISSVDQILTALALTR. Residues 61 to 81 form a helical membrane-spanning segment; the sequence is FIYVLSMLICILLFMLCPHLP. Topologically, residues 82–90 are extracellular; the sequence is RRSEMLSAM. The helical transmembrane segment at 91-111 threads the bilayer; that stretch reads GIFWVVNSHFSIWLTTCLGVF. Residues 112 to 134 lie on the Cytoplasmic side of the membrane; it reads YFLKIANFSNSFFLYLKWRVKKV. Residues 135–155 form a helical membrane-spanning segment; that stretch reads ILIIILASLIFLTLHILSLGI. At 156-205 the chain is on the extracellular side; the sequence is YDQFSIAAYVGNMSYSLTDLTQFSSTFLFSNSSNVFLITNSSHVFLPINS. Residues N167, N186, and N195 are each glycosylated (N-linked (GlcNAc...) asparagine). Residues 206 to 226 form a helical membrane-spanning segment; it reads LFMLIPFTVSLVAFLMLIFSL. Residues 227–253 are Cytoplasmic-facing; it reads WKHHKKMQVNAKQPRDVSTMAHIKALQ. The chain crosses the membrane as a helical span at residues 254–274; the sequence is TVFSFLLLYAIYLLFLIIGIL. The Extracellular portion of the chain corresponds to 275–281; it reads NLGLMEK. The helical transmembrane segment at 282–302 threads the bilayer; sequence IVILIFDHISGAVFPISHSFV. The Cytoplasmic portion of the chain corresponds to 303 to 333; sequence LILGNSKLRQASLSVLPCLRCQSKDMDTMGL.

It belongs to the G-protein coupled receptor T2R family. As to expression, expressed in subsets of taste receptor cells of the tongue and palate epithelium and exclusively in gustducin-positive cells. Expressed in the duodenum, antrum and fundus (part of the stomach).

It is found in the membrane. In terms of biological role, gustducin-coupled receptor implicated in the perception of bitter compounds in the oral cavity and the gastrointestinal tract. Signals through PLCB2 and the calcium-regulated cation channel TRPM5. The chain is Taste receptor type 2 member 123 (Tas2r123) from Mus musculus (Mouse).